A 395-amino-acid polypeptide reads, in one-letter code: S-adenosylmethionine synthase (395 aa).

H15 provides a ligand contact to ATP. Residue D17 participates in Mg(2+) binding. Residue E43 coordinates K(+). 2 residues coordinate L-methionine: E56 and Q99. The flexible loop stretch occupies residues 99 to 109 (QSADIALGVDE). ATP is bound by residues 174 to 176 (DGK), 240 to 241 (RF), D249, 255 to 256 (RK), A272, and K276. D249 contributes to the L-methionine binding site. Position 280 (K280) interacts with L-methionine.

The protein belongs to the AdoMet synthase family. In terms of assembly, homotetramer; dimer of dimers. It depends on Mg(2+) as a cofactor. Requires K(+) as cofactor.

It is found in the cytoplasm. It catalyses the reaction L-methionine + ATP + H2O = S-adenosyl-L-methionine + phosphate + diphosphate. It functions in the pathway amino-acid biosynthesis; S-adenosyl-L-methionine biosynthesis; S-adenosyl-L-methionine from L-methionine: step 1/1. Its function is as follows. Catalyzes the formation of S-adenosylmethionine (AdoMet) from methionine and ATP. The overall synthetic reaction is composed of two sequential steps, AdoMet formation and the subsequent tripolyphosphate hydrolysis which occurs prior to release of AdoMet from the enzyme. This Alkaliphilus oremlandii (strain OhILAs) (Clostridium oremlandii (strain OhILAs)) protein is S-adenosylmethionine synthase.